The sequence spans 123 residues: Hydrogenase maturation factor HypA (123 aa).

Histidine 2 is a Ni(2+) binding site. Zn(2+) is bound by residues cysteine 77, cysteine 80, cysteine 96, and cysteine 99.

This sequence belongs to the HypA/HybF family.

Its function is as follows. Involved in the maturation of [NiFe] hydrogenases. Required for nickel insertion into the metal center of the hydrogenase. The protein is Hydrogenase maturation factor HypA of Methanococcus aeolicus (strain ATCC BAA-1280 / DSM 17508 / OCM 812 / Nankai-3).